The chain runs to 119 residues: Protein TusC (119 aa).

Belongs to the DsrF/TusC family. As to quaternary structure, heterohexamer, formed by a dimer of trimers. The hexameric TusBCD complex contains 2 copies each of TusB, TusC and TusD. The TusBCD complex interacts with TusE.

It localises to the cytoplasm. Its function is as follows. Part of a sulfur-relay system required for 2-thiolation of 5-methylaminomethyl-2-thiouridine (mnm(5)s(2)U) at tRNA wobble positions. The sequence is that of Protein TusC from Buchnera aphidicola subsp. Acyrthosiphon pisum (strain 5A).